The sequence spans 478 residues: Adenosylhomocysteinase (478 aa).

Threonine 57, aspartate 139, and glutamate 201 together coordinate substrate. Position 202 to 204 (202 to 204 (TTT)) interacts with NAD(+). Lysine 231 and aspartate 235 together coordinate substrate. Residues asparagine 236, 265–270 (GYGDVG), glutamate 288, asparagine 323, 344–346 (IGH), and asparagine 392 contribute to the NAD(+) site.

It belongs to the adenosylhomocysteinase family. The cofactor is NAD(+).

Its subcellular location is the cytoplasm. The enzyme catalyses S-adenosyl-L-homocysteine + H2O = L-homocysteine + adenosine. It functions in the pathway amino-acid biosynthesis; L-homocysteine biosynthesis; L-homocysteine from S-adenosyl-L-homocysteine: step 1/1. May play a key role in the regulation of the intracellular concentration of adenosylhomocysteine. The polypeptide is Adenosylhomocysteinase (Corynebacterium glutamicum (strain R)).